Reading from the N-terminus, the 136-residue chain is Small ribosomal subunit protein uS9 (136 aa).

Positions 97 to 136 are disordered; sequence SPDNRKPLKTEGHLSRDPRAKERRKYGLKKARKAPQFSKR. A compositionally biased stretch (basic and acidic residues) spans 98–116; that stretch reads PDNRKPLKTEGHLSRDPRA. The segment covering 117-136 has biased composition (basic residues); it reads KERRKYGLKKARKAPQFSKR.

This sequence belongs to the universal ribosomal protein uS9 family.

The sequence is that of Small ribosomal subunit protein uS9 from Prochlorococcus marinus (strain MIT 9312).